The following is a 315-amino-acid chain: Methionyl-tRNA formyltransferase (315 aa).

(6S)-5,6,7,8-tetrahydrofolate is bound at residue 113 to 116 (SLLP).

The protein belongs to the Fmt family.

The enzyme catalyses L-methionyl-tRNA(fMet) + (6R)-10-formyltetrahydrofolate = N-formyl-L-methionyl-tRNA(fMet) + (6S)-5,6,7,8-tetrahydrofolate + H(+). In terms of biological role, attaches a formyl group to the free amino group of methionyl-tRNA(fMet). The formyl group appears to play a dual role in the initiator identity of N-formylmethionyl-tRNA by promoting its recognition by IF2 and preventing the misappropriation of this tRNA by the elongation apparatus. This chain is Methionyl-tRNA formyltransferase, found in Shigella sonnei (strain Ss046).